A 251-amino-acid polypeptide reads, in one-letter code: Coproheme decarboxylase (251 aa).

Residues Arg133, 147-151 (YPMSK), His174, Gln187, and Ser225 each bind Fe-coproporphyrin III. Tyr147 is an active-site residue.

It belongs to the ChdC family. Type 1 subfamily. Requires Fe-coproporphyrin III as cofactor.

The enzyme catalyses Fe-coproporphyrin III + 2 H2O2 + 2 H(+) = heme b + 2 CO2 + 4 H2O. The catalysed reaction is Fe-coproporphyrin III + H2O2 + H(+) = harderoheme III + CO2 + 2 H2O. It carries out the reaction harderoheme III + H2O2 + H(+) = heme b + CO2 + 2 H2O. It functions in the pathway porphyrin-containing compound metabolism; protoheme biosynthesis. Functionally, involved in coproporphyrin-dependent heme b biosynthesis. Catalyzes the decarboxylation of Fe-coproporphyrin III (coproheme) to heme b (protoheme IX), the last step of the pathway. The reaction occurs in a stepwise manner with a three-propionate intermediate. The chain is Coproheme decarboxylase from Listeria monocytogenes serotype 4a (strain HCC23).